The sequence spans 443 residues: Phosphoglucosamine mutase (443 aa).

Ser102 functions as the Phosphoserine intermediate in the catalytic mechanism. Mg(2+) contacts are provided by Ser102, Asp241, Asp243, and Asp245. Ser102 is modified (phosphoserine).

This sequence belongs to the phosphohexose mutase family. The cofactor is Mg(2+). Activated by phosphorylation.

The catalysed reaction is alpha-D-glucosamine 1-phosphate = D-glucosamine 6-phosphate. Functionally, catalyzes the conversion of glucosamine-6-phosphate to glucosamine-1-phosphate. The sequence is that of Phosphoglucosamine mutase from Albidiferax ferrireducens (strain ATCC BAA-621 / DSM 15236 / T118) (Rhodoferax ferrireducens).